We begin with the raw amino-acid sequence, 202 residues long: MDKFVKLTGVAAPLPVVNIDTDMIIPKDYLKTIKRTGLGKGLFAEARYNEDGSENPDFVLNKPAYRDAKILVAGDNFGCGSSREHAPWALLDFGIRCVISTSFADIFYNNCFKNGILPIKVSQENLDKLMDDASRGSNAILTVDLENLEITGPDGGSIKFDLDEFKRHCLLNGLDDIGLTLEKGKAIDEFEKKNAASHPWAA.

This sequence belongs to the LeuD family. LeuD type 1 subfamily. As to quaternary structure, heterodimer of LeuC and LeuD.

It carries out the reaction (2R,3S)-3-isopropylmalate = (2S)-2-isopropylmalate. The protein operates within amino-acid biosynthesis; L-leucine biosynthesis; L-leucine from 3-methyl-2-oxobutanoate: step 2/4. Catalyzes the isomerization between 2-isopropylmalate and 3-isopropylmalate, via the formation of 2-isopropylmaleate. The protein is 3-isopropylmalate dehydratase small subunit of Rhizobium etli (strain ATCC 51251 / DSM 11541 / JCM 21823 / NBRC 15573 / CFN 42).